A 562-amino-acid chain; its full sequence is Potassium-transporting ATPase potassium-binding subunit (562 aa).

Transmembrane regions (helical) follow at residues 6-26, 62-82, 132-152, 175-195, 253-273, 283-303, 327-347, 356-376, 379-399, 416-436, 483-503, and 526-546; these read FLLI…LGGF, YALA…VLLM, GLTV…FALI, LYVL…QGVL, FVQM…FGQV, LIWA…YAEL, FGIL…CGAV, ALGG…FGGV, GLYG…LMIG, MTAL…ALAL, LLLA…VLAI, and LFIG…FIPA.

It belongs to the KdpA family. As to quaternary structure, the system is composed of three essential subunits: KdpA, KdpB and KdpC.

The protein localises to the cell inner membrane. In terms of biological role, part of the high-affinity ATP-driven potassium transport (or Kdp) system, which catalyzes the hydrolysis of ATP coupled with the electrogenic transport of potassium into the cytoplasm. This subunit binds the periplasmic potassium ions and delivers the ions to the membrane domain of KdpB through an intramembrane tunnel. The polypeptide is Potassium-transporting ATPase potassium-binding subunit (Yersinia pseudotuberculosis serotype IB (strain PB1/+)).